Here is a 292-residue protein sequence, read N- to C-terminus: Nucleophosmin (292 aa).

Methionine 1 carries the post-translational modification N-acetylmethionine. Residues 1–117 (MEDSMDMDMS…PVHISGQHLV (117 aa)) are necessary for interaction with APEX1. Residues 1 to 185 (MEDSMDMDMS…DDDDFDEEET (185 aa)) form a required for interaction with SENP3 region. Serine 4 is modified (phosphoserine; by PLK1 and PLK2). The residue at position 10 (serine 10) is a Phosphoserine. Residue lysine 27 forms a Glycyl lysine isopeptide (Lys-Gly) (interchain with G-Cter in SUMO2) linkage. At lysine 32 the chain carries N6-acetyllysine; alternate. Lysine 32 participates in a covalent cross-link: Glycyl lysine isopeptide (Lys-Gly) (interchain with G-Cter in SUMO1); alternate. Residue lysine 32 forms a Glycyl lysine isopeptide (Lys-Gly) (interchain with G-Cter in SUMO2); alternate linkage. At serine 43 the chain carries Phosphoserine. Tyrosine 67 is modified (phosphotyrosine). At serine 70 the chain carries Phosphoserine. 2 positions are modified to phosphothreonine: threonine 75 and threonine 95. Residues serine 125 and serine 139 each carry the phosphoserine modification. The tract at residues 138–248 (MSGKRSAPGG…PSSVEDIKAK (111 aa)) is disordered. A Glycyl lysine isopeptide (Lys-Gly) (interchain with G-Cter in SUMO2) cross-link involves residue lysine 141. Position 150 is an N6-acetyllysine; alternate (lysine 150). Lysine 150 is covalently cross-linked (Glycyl lysine isopeptide (Lys-Gly) (interchain with G-Cter in SUMO2); alternate). A Nuclear localization signal motif is present at residues 152 to 157 (PQKKVK). Lysine 154 carries the N6-acetyllysine modification. Over residues 159–186 (DEDDEDDDEDDEDDEDDDDDDFDEEETE) the composition is skewed to acidic residues. The interval 186–214 (EEKVPVKKSVRDTPAKNAQKSNQNGKDLK) is interaction with NOP2. Residues 187-199 (EKVPVKKSVRDTP) are compositionally biased toward basic and acidic residues. Residues 190 to 196 (PVKKSVR) carry the Nuclear localization signal motif. Residue threonine 198 is modified to Phosphothreonine; by CDK1 and CDK2. Over residues 201 to 210 (KNAQKSNQNG) the composition is skewed to polar residues. Serine 206 bears the ADP-ribosylserine mark. Lysine 211 is modified (N6-acetyllysine). Lysine 214 is covalently cross-linked (Glycyl lysine isopeptide (Lys-Gly) (interchain with G-Cter in SUMO2)). Threonine 217 is subject to Phosphothreonine; by CDK1. Positions 221–233 (KGQESFKKQEKTP) are enriched in basic and acidic residues. Serine 225 bears the Phosphoserine mark. Position 227 is an N6-acetyllysine (lysine 227). An N6-acetyllysine; alternate modification is found at lysine 228. Lysine 228 is covalently cross-linked (Glycyl lysine isopeptide (Lys-Gly) (interchain with G-Cter in SUMO); alternate). Residues threonine 232 and threonine 235 each carry the phosphothreonine; by CDK1 modification. Phosphoserine occurs at positions 240 and 241. The interval 241 to 292 (SVEDIKAKMQASIEKGGSLPKVEAKFINYVKNCFRMTDQEAIQDLWQWRKSL) is required for nucleolar localization. Lysine 246 is covalently cross-linked (Glycyl lysine isopeptide (Lys-Gly) (interchain with G-Cter in SUMO1); alternate). Glycyl lysine isopeptide (Lys-Gly) (interchain with G-Cter in SUMO2); alternate cross-links involve residues lysine 246 and lysine 248. Lysine 248 is subject to N6-acetyllysine; alternate. Serine 252 is modified (phosphoserine). Residue lysine 255 is modified to N6-acetyllysine; alternate. A Glycyl lysine isopeptide (Lys-Gly) (interchain with G-Cter in SUMO1); alternate cross-link involves residue lysine 255. Lysine 255 is covalently cross-linked (Glycyl lysine isopeptide (Lys-Gly) (interchain with G-Cter in SUMO2); alternate). A Phosphoserine modification is found at serine 258. Glycyl lysine isopeptide (Lys-Gly) (interchain with G-Cter in SUMO2); alternate cross-links involve residues lysine 261, lysine 265, and lysine 271. Lysine 261 participates in a covalent cross-link: Glycyl lysine isopeptide (Lys-Gly) (interchain with G-Cter in SUMO); alternate. An N6-acetyllysine; alternate mark is found at lysine 265 and lysine 271. Lysine 265 participates in a covalent cross-link: Glycyl lysine isopeptide (Lys-Gly) (interchain with G-Cter in SUMO1); alternate. Residue lysine 265 is modified to N6-succinyllysine; alternate. At threonine 277 the chain carries Phosphothreonine. Lysine 290 is modified (N6-acetyllysine).

This sequence belongs to the nucleoplasmin family. In terms of assembly, decamer formed by two pentameric rings associated in a head-to-head fashion. Disulfide-linked dimers under certain conditions. Interacts with NSUN2 and SENP3. The SWAP complex consists of NPM1, NCL, PARP1 and SWAP70. Interacts with the methylated form of RPS10. Interacts (via N-terminal domain) with APEX1; the interaction is RNA-dependent and decreases peroxide-damaged cells. Interacts with NEK2. Interacts with ROCK2 and BRCA2. Interacts with RPGR. Interacts with CENPW. Interacts with EIF2AK2/PKR. Interacts with DDX31; this interaction prevents interaction between NPM1 and HDM2. Interacts with MYC; competitive with NOP53. Interacts with NOP53; the interaction is direct and competitive with MYC. Interacts with LRRC34. Interacts with RRP1B. Interacts with NPM3. Interacts with ALKBH2. Interacts with TTF1 (via C-terminal region). Interacts with NOP2. Interacts with ARID3C (via REKLES DOMAIN); the interaction mediates ARID3C nuclear shuttling. In terms of processing, acetylated at C-terminal lysine residues, thereby increasing affinity to histones. ADP-ribosylated. Post-translationally, phosphorylated at Ser-4 by PLK1 and PLK2. Phosphorylation at Ser-4 by PLK2 in S phase is required for centriole duplication and is sufficient to trigger centriole replication. Phosphorylation at Ser-4 by PLK1 takes place during mitosis. Phosphorylated by CDK2 at Ser-125 and Thr-198. Phosphorylation at Thr-198 may trigger initiation of centrosome duplication. Phosphorylated by CDK1 at Thr-198, Thr-217, Thr-232 and Thr-235 during cell mitosis. When these four sites are phosphorated, RNA-binding activity seem to be abolished. May be phosphorylated at Ser-70 by NEK2. The Thr-198 phosphorylated form has higher affinity for ROCK2. In terms of processing, sumoylated by ARF. Ubiquitinated. Ubiquitination leads to proteasomal degradation. Deubiquitinated by USP36. As to expression, expressed in B-cells that have been induced to switch to various Ig isotypes.

It is found in the nucleus. The protein resides in the nucleolus. Its subcellular location is the nucleoplasm. It localises to the cytoplasm. The protein localises to the cytoskeleton. It is found in the microtubule organizing center. The protein resides in the centrosome. Involved in diverse cellular processes such as ribosome biogenesis, centrosome duplication, protein chaperoning, histone assembly, cell proliferation, and regulation of tumor suppressors p53/TP53 and ARF. Binds ribosome presumably to drive ribosome nuclear export. Associated with nucleolar ribonucleoprotein structures and bind single-stranded nucleic acids. Acts as a chaperonin for the core histones H3, H2B and H4. Stimulates APEX1 endonuclease activity on apurinic/apyrimidinic (AP) double-stranded DNA but inhibits APEX1 endonuclease activity on AP single-stranded RNA. May exert a control of APEX1 endonuclease activity within nucleoli devoted to repair AP on rDNA and the removal of oxidized rRNA molecules. In concert with BRCA2, regulates centrosome duplication. Regulates centriole duplication: phosphorylation by PLK2 is able to trigger centriole replication. Negatively regulates the activation of EIF2AK2/PKR and suppresses apoptosis through inhibition of EIF2AK2/PKR autophosphorylation. Antagonizes the inhibitory effect of ATF5 on cell proliferation and relieves ATF5-induced G2/M blockade. In complex with MYC enhances the transcription of MYC target genes. May act as chaperonin or cotransporter in the nucleolar localization of transcription termination factor TTF1. In Mus musculus (Mouse), this protein is Nucleophosmin (Npm1).